The chain runs to 209 residues: Ribosomal RNA large subunit methyltransferase E (209 aa).

S-adenosyl-L-methionine is bound by residues Gly63, Trp65, Asp83, Asp99, and Asp124. The Proton acceptor role is filled by Lys164. Positions 191-209 (EASRGRSREVYIVATGYKG) constitute a TRAM domain.

This sequence belongs to the class I-like SAM-binding methyltransferase superfamily. RNA methyltransferase RlmE family.

It localises to the cytoplasm. The enzyme catalyses uridine(2552) in 23S rRNA + S-adenosyl-L-methionine = 2'-O-methyluridine(2552) in 23S rRNA + S-adenosyl-L-homocysteine + H(+). Functionally, specifically methylates the uridine in position 2552 of 23S rRNA at the 2'-O position of the ribose in the fully assembled 50S ribosomal subunit. The chain is Ribosomal RNA large subunit methyltransferase E from Haemophilus influenzae (strain ATCC 51907 / DSM 11121 / KW20 / Rd).